The following is a 494-amino-acid chain: UPF0371 protein SPy_1343/M5005_Spy1095 (494 aa).

Belongs to the UPF0371 family.

This is UPF0371 protein SPy_1343/M5005_Spy1095 from Streptococcus pyogenes serotype M1.